The chain runs to 386 residues: Putative gustatory receptor 92a (386 aa).

The Cytoplasmic portion of the chain corresponds to 1 to 14 (MFEFLHQMSAPKLS). The helical transmembrane segment at 15–35 (TSILRYIFRYAQFIGVIFFCL) threads the bilayer. The Extracellular portion of the chain corresponds to 36 to 79 (HTRKDDKTVFIRNWLKWLNVTHRIITFTRFFWVYIASISIKTNR). A glycan (N-linked (GlcNAc...) asparagine) is linked at Asn-54. A helical transmembrane segment spans residues 80–100 (VLQVLHGMRLVLSIPNVAVIL). The Cytoplasmic segment spans residues 101–141 (CYHIFRGPEIIDLINQFLRLFRQVSDLFKTKTPGFGGRREL). A helical membrane pass occupies residues 142–162 (ILILLNLISFAHEQTYLWFTI). At 163-169 (RKGFSWR) the chain is on the extracellular side. Residues 170–190 (FLIDWWCDFYLVSATNIFIHI) traverse the membrane as a helical segment. Residues 191–256 (NSIGYLSLGV…YHTSIMFHKL (66 aa)) are Cytoplasmic-facing. The helical transmembrane segment at 257-277 (FVPLLFLALIYKVLLIALIGF) threads the bilayer. At 278 to 287 (NVAVEFYLNS) the chain is on the extracellular side. Residues 288-308 (FIFWILLGKHVLDLFLVTVSV) form a helical membrane-spanning segment. Over 309 to 356 (EGAVNQFLNIGMQFGNVGDLSKFQTTLDTLFLHLRLGHFRVSILGLFD) the chain is Cytoplasmic. A helical transmembrane segment spans residues 357-377 (VTQMQYLQFLSALLSGLAFIA). Over 378 to 386 (QYRMQVGNG) the chain is Extracellular.

The protein belongs to the insect chemoreceptor superfamily. Gustatory receptor (GR) family. Gr93a subfamily.

The protein resides in the cell membrane. Its function is as follows. Probable gustatory receptor which mediates acceptance or avoidance behavior, depending on its substrates. The sequence is that of Putative gustatory receptor 92a (Gr92a) from Drosophila melanogaster (Fruit fly).